Here is a 174-residue protein sequence, read N- to C-terminus: Gamma-crystallin S (174 aa).

Beta/gamma crystallin 'Greek key' domains lie at 2–40 (GRIIFYEDKNFQGRRYECDSDCSDFHAFLNRCNSIRVES) and 41–83 (GAWV…KMIH). Positions 84–89 (FVSGSE) are connecting peptide. Beta/gamma crystallin 'Greek key' domains are found at residues 90 to 130 (YKIQ…KVLD) and 131 to 173 (GIWI…KRLM).

It belongs to the beta/gamma-crystallin family.

Functionally, crystallins are the dominant structural components of the vertebrate eye lens. This is Gamma-crystallin S (crygs) from Cyprinus carpio (Common carp).